A 245-amino-acid polypeptide reads, in one-letter code: Biosynthetic peptidoglycan transglycosylase (245 aa).

Residues 20–42 (VYAGSVFAGAWLATQLFYLAQIA) form a helical membrane-spanning segment.

Belongs to the glycosyltransferase 51 family.

It localises to the cell inner membrane. It carries out the reaction [GlcNAc-(1-&gt;4)-Mur2Ac(oyl-L-Ala-gamma-D-Glu-L-Lys-D-Ala-D-Ala)](n)-di-trans,octa-cis-undecaprenyl diphosphate + beta-D-GlcNAc-(1-&gt;4)-Mur2Ac(oyl-L-Ala-gamma-D-Glu-L-Lys-D-Ala-D-Ala)-di-trans,octa-cis-undecaprenyl diphosphate = [GlcNAc-(1-&gt;4)-Mur2Ac(oyl-L-Ala-gamma-D-Glu-L-Lys-D-Ala-D-Ala)](n+1)-di-trans,octa-cis-undecaprenyl diphosphate + di-trans,octa-cis-undecaprenyl diphosphate + H(+). Its pathway is cell wall biogenesis; peptidoglycan biosynthesis. Functionally, peptidoglycan polymerase that catalyzes glycan chain elongation from lipid-linked precursors. The sequence is that of Biosynthetic peptidoglycan transglycosylase from Burkholderia cenocepacia (strain HI2424).